The sequence spans 62 residues: Large ribosomal subunit protein bL32 (62 aa).

The interval 28–62 (SIEPTTGEVHRRHHISPDGFYRGRQVIKAKEQDEE) is disordered.

Belongs to the bacterial ribosomal protein bL32 family.

This is Large ribosomal subunit protein bL32 from Thioalkalivibrio sulfidiphilus (strain HL-EbGR7).